The following is a 676-amino-acid chain: Serine/threonine-protein kinase Haspin homolog ALK2 (676 aa).

Residues 53–93 (HKGSAEDESQSFFTSSDSPTSKTRPVGKTIENDDYYGKRSS) form a disordered region. Residues 62–75 (QSFFTSSDSPTSKT) show a composition bias toward polar residues. A KEN box motif is present at residues 116-118 (KEN). The D box signature appears at 150–158 (RTPLRPISN). The tract at residues 228–312 (SSRSVNDQDP…HKTSHSSLNK (85 aa)) is disordered. Over residues 232-259 (VNDQDPNFVQPKPTNSLQKKSSISSFHN) the composition is skewed to polar residues. The region spanning 383 to 672 (LCDVKYILHD…TCGDLLSLKG (290 aa)) is the Protein kinase domain. Residues 389-397 (ILHDLREAQ) and lysine 430 contribute to the ATP site.

It belongs to the protein kinase superfamily. Ser/Thr protein kinase family. Haspin subfamily. Post-translationally, periodically phosphorylated during the cell cycle with a phosphorylation peak during mitosis and hyperphosphorylated after DNA damage.

The catalysed reaction is L-seryl-[protein] + ATP = O-phospho-L-seryl-[protein] + ADP + H(+). The enzyme catalyses L-threonyl-[protein] + ATP = O-phospho-L-threonyl-[protein] + ADP + H(+). Functionally, serine/threonine haspin-like protein kinase involved in cell cycle regulation. The protein is Serine/threonine-protein kinase Haspin homolog ALK2 (ALK2) of Saccharomyces cerevisiae (strain ATCC 204508 / S288c) (Baker's yeast).